Here is a 317-residue protein sequence, read N- to C-terminus: MTPNKPTLHPRNRHQGRYDFPSLIKAHPDLARFTITNPHGKPSIDFANPEAVRVFNRALLKAQYGIQHWDIPADYLCPPIPGRADYIHVAADLLADDNAGDVPRGAQVRALDIGVGANCIYPLLGYSDYRWRFLGSDIDPVALASAKAIVQANGLGKAITLRQQANRAHILSGLLQEGERFDLTLCNPPFHASRDEATRGSQRKWKNLGKQDPKRKLPVLNFGGQNNELWCEGGEIRFVTQLIGESVQYAERVLWFTSLVSKASNLPGIEAALKKSGAKAVRIIEMGQGQKQSRMVAWSFLDDAARQAWHAQRKSQA.

This sequence belongs to the methyltransferase superfamily. METTL16/RlmF family.

The protein resides in the cytoplasm. It carries out the reaction adenosine(1618) in 23S rRNA + S-adenosyl-L-methionine = N(6)-methyladenosine(1618) in 23S rRNA + S-adenosyl-L-homocysteine + H(+). Functionally, specifically methylates the adenine in position 1618 of 23S rRNA. The sequence is that of Ribosomal RNA large subunit methyltransferase F from Pseudomonas putida (strain ATCC 47054 / DSM 6125 / CFBP 8728 / NCIMB 11950 / KT2440).